Consider the following 146-residue polypeptide: Large ribosomal subunit protein uL15 (146 aa).

The tract at residues 1–62 is disordered; sequence MRLHELRPKT…GQMPLQERLP (62 aa). The span at 10-21 shows a compositional bias: basic residues; the sequence is TNYKKSRKRKGR. The segment covering 42–52 has biased composition (gly residues); that stretch reads TGGGVRPGFEG.

The protein belongs to the universal ribosomal protein uL15 family. As to quaternary structure, part of the 50S ribosomal subunit.

Binds to the 23S rRNA. The chain is Large ribosomal subunit protein uL15 from Natranaerobius thermophilus (strain ATCC BAA-1301 / DSM 18059 / JW/NM-WN-LF).